The sequence spans 204 residues: Octanoyltransferase (204 aa).

One can recognise a BPL/LPL catalytic domain in the interval 27–202 (QGGEEALLLL…RFQPFLHLHL (176 aa)). Residues 65-72 (RGGDVTYH), 132-134 (SIG), and 145-147 (GFA) contribute to the substrate site. Cys163 acts as the Acyl-thioester intermediate in catalysis.

This sequence belongs to the LipB family.

The protein resides in the cytoplasm. It catalyses the reaction octanoyl-[ACP] + L-lysyl-[protein] = N(6)-octanoyl-L-lysyl-[protein] + holo-[ACP] + H(+). It participates in protein modification; protein lipoylation via endogenous pathway; protein N(6)-(lipoyl)lysine from octanoyl-[acyl-carrier-protein]: step 1/2. Its function is as follows. Catalyzes the transfer of endogenously produced octanoic acid from octanoyl-acyl-carrier-protein onto the lipoyl domains of lipoate-dependent enzymes. Lipoyl-ACP can also act as a substrate although octanoyl-ACP is likely to be the physiological substrate. The chain is Octanoyltransferase from Geobacter sp. (strain M21).